Here is a 465-residue protein sequence, read N- to C-terminus: Chromosomal replication initiator protein DnaA (465 aa).

The tract at residues 1–85 is domain I, interacts with DnaA modulators; that stretch reads MSGFWESCLQ…IALVIGSGKA (85 aa). Residues 85 to 129 are domain II; the sequence is ATAARIQATTTDSGQNAPANPATTSEKRTAASEKARGKGSNYEKS. Polar residues predominate over residues 93-108; the sequence is TTTDSGQNAPANPATT. The interval 93-125 is disordered; the sequence is TTTDSGQNAPANPATTSEKRTAASEKARGKGSN. Residues 109 to 125 show a composition bias toward basic and acidic residues; it reads SEKRTAASEKARGKGSN. The interval 130–346 is domain III, AAA+ region; it reads RLFPSFTFDN…GALKKVLAYS (217 aa). 4 residues coordinate ATP: Gly174, Gly176, Lys177, and Thr178. The segment at 347–465 is domain IV, binds dsDNA; that stretch reads SFHGRVIALD…LHVLLQVLKG (119 aa).

This sequence belongs to the DnaA family. Oligomerizes as a right-handed, spiral filament on DNA at oriC.

It is found in the cytoplasm. Functionally, plays an essential role in the initiation and regulation of chromosomal replication. ATP-DnaA binds to the origin of replication (oriC) to initiate formation of the DNA replication initiation complex once per cell cycle. Binds the DnaA box (a 9 base pair repeat at the origin) and separates the double-stranded (ds)DNA. Forms a right-handed helical filament on oriC DNA; dsDNA binds to the exterior of the filament while single-stranded (ss)DNA is stabiized in the filament's interior. The ATP-DnaA-oriC complex binds and stabilizes one strand of the AT-rich DNA unwinding element (DUE), permitting loading of DNA polymerase. After initiation quickly degrades to an ADP-DnaA complex that is not apt for DNA replication. Binds acidic phospholipids. This is Chromosomal replication initiator protein DnaA from Dechloromonas aromatica (strain RCB).